The primary structure comprises 358 residues: Chorismate synthase (358 aa).

R46 is an NADP(+) binding site. FMN is bound by residues 123–125 (RSS), 235–236 (NA), G275, 290–294 (KATPS), and R316.

The protein belongs to the chorismate synthase family. Homotetramer. FMNH2 serves as cofactor.

It carries out the reaction 5-O-(1-carboxyvinyl)-3-phosphoshikimate = chorismate + phosphate. The protein operates within metabolic intermediate biosynthesis; chorismate biosynthesis; chorismate from D-erythrose 4-phosphate and phosphoenolpyruvate: step 7/7. Functionally, catalyzes the anti-1,4-elimination of the C-3 phosphate and the C-6 proR hydrogen from 5-enolpyruvylshikimate-3-phosphate (EPSP) to yield chorismate, which is the branch point compound that serves as the starting substrate for the three terminal pathways of aromatic amino acid biosynthesis. This reaction introduces a second double bond into the aromatic ring system. The protein is Chorismate synthase of Aliarcobacter butzleri (strain RM4018) (Arcobacter butzleri).